A 167-amino-acid polypeptide reads, in one-letter code: MNNKHPKNKAKSTTTPKTIALNKRARHEYHLIERHEAGLELQGWEVKAIRAGRANLGDGYAYVRDGEIFLIGAQITPLIQASTHVVANDRRTRKLLLHRHQIDTLIGRVQREGFTLVPTAMYWSKNRVKMEIALAKGKQAHDKRHAEKEREWQRDKQRIMRAHNRNA.

The interval 139–167 is disordered; it reads QAHDKRHAEKEREWQRDKQRIMRAHNRNA. Residues 144 to 158 are compositionally biased toward basic and acidic residues; it reads RHAEKEREWQRDKQR.

It belongs to the SmpB family.

It is found in the cytoplasm. Its function is as follows. Required for rescue of stalled ribosomes mediated by trans-translation. Binds to transfer-messenger RNA (tmRNA), required for stable association of tmRNA with ribosomes. tmRNA and SmpB together mimic tRNA shape, replacing the anticodon stem-loop with SmpB. tmRNA is encoded by the ssrA gene; the 2 termini fold to resemble tRNA(Ala) and it encodes a 'tag peptide', a short internal open reading frame. During trans-translation Ala-aminoacylated tmRNA acts like a tRNA, entering the A-site of stalled ribosomes, displacing the stalled mRNA. The ribosome then switches to translate the ORF on the tmRNA; the nascent peptide is terminated with the 'tag peptide' encoded by the tmRNA and targeted for degradation. The ribosome is freed to recommence translation, which seems to be the essential function of trans-translation. The polypeptide is SsrA-binding protein (Xylella fastidiosa (strain M23)).